The sequence spans 479 residues: MATDSWALAVDEQEAAAESLSNLHLKEEKIKPDTNGAVVKTNANAEKTDEEEKEDRAAQSLLNKLIRSNLVDNTNQVEVLQRDPNSPLYSVKSFEELRLKPQLLQGVYAMGFNRPSKIQENALPLMLAEPPQNLIAQSQSGTGKTAAFVLAMLSQVEPANKYPQCLCLSPTYELALQTGKVIEQMGKFYPELKLAYAVRGNKLERGQKISEQIVIGTPGTVLDWCSKLKFIDPKKIKVFVLDEADVMIATQGHQDQSIRIQRMLPRNCQMLLFSATFEDSVWKFAQKVVPDPNVIKLKREEETLDTIKQYYVLCSSRDEKFQALCNLYGAITIAQAMIFCHTRKTASWLAAELSKEGHQVALLSGEMMVEQRAAVIERFREGKEKVLVTTNVCARGIDVEQVSVVINFDLPVDKDGNPDNETYLHRIGRTGRFGKRGLAVNMVDSKHSMNILNRIQEHFNKKIERLDTDDLDEIEKIAN.

Ala-2 bears the N-acetylalanine mark. The tract at residues 2-300 (ATDSWALAVD…DPNVIKLKRE (299 aa)) is N-terminal lobe. The tract at residues 34 to 54 (TNGAVVKTNANAEKTDEEEKE) is disordered. Residues 55–68 (DRAAQSLLNKLIRS) are N-terminal helix. A Q motif motif is present at residues 92-120 (KSFEELRLKPQLLQGVYAMGFNRPSKIQE). Residues Gln-119 and 138 to 145 (SQSGTGKT) each bind ATP. In terms of domain architecture, Helicase ATP-binding spans 125–295 (LMLAEPPQNL…QKVVPDPNVI (171 aa)). Residues 242–245 (DEAD) carry the DEAD box motif. The tract at residues 301 to 479 (EETLDTIKQY…DLDEIEKIAN (179 aa)) is C-terminal lobe. The Helicase C-terminal domain occupies 306-474 (TIKQYYVLCS…RLDTDDLDEI (169 aa)). Positions 429 and 432 each coordinate ATP.

Belongs to the DEAD box helicase family. DDX19/DBP5 subfamily. In terms of assembly, associates with the nuclear pore complex via interaction with NUP214. Interacts with NUP214 or RNA in a mutually exclusive manner.

It localises to the cytoplasm. It is found in the nucleus. The protein resides in the nucleoplasm. It catalyses the reaction ATP + H2O = ADP + phosphate + H(+). Its function is as follows. ATP-dependent RNA helicase involved in mRNA export from the nucleus. Rather than unwinding RNA duplexes, DDX19B functions as a remodeler of ribonucleoprotein particles, whereby proteins bound to nuclear mRNA are dissociated and replaced by cytoplasmic mRNA binding proteins. In Homo sapiens (Human), this protein is ATP-dependent RNA helicase DDX19B (DDX19B).